Reading from the N-terminus, the 33-residue chain is Dermaseptin-4 (33 aa).

Leu-33 bears the Leucine amide mark.

Expressed by the skin glands.

It localises to the secreted. Functionally, has antiparasitic activity against trypomastigote form of T.cruzi (IC(50)=0.25 uM) in vitro but not against L.infantum. Probably acts by permeabilizing cell membranes. In vitro, shows no cytotoxicity against macrophages. Has antibacterial activity. The polypeptide is Dermaseptin-4 (Pithecopus nordestinus (Northeastern Brazilian leaf frog)).